The sequence spans 264 residues: 3'-5' ssDNA/RNA exonuclease TatD (264 aa).

A divalent metal cation contacts are provided by E92, H128, and H153.

Belongs to the metallo-dependent hydrolases superfamily. TatD-type hydrolase family. TatD subfamily. As to quaternary structure, monomer. Mg(2+) is required as a cofactor.

Its subcellular location is the cytoplasm. Its function is as follows. 3'-5' exonuclease that prefers single-stranded DNA and RNA. May play a role in the H(2)O(2)-induced DNA damage repair. This chain is 3'-5' ssDNA/RNA exonuclease TatD, found in Dickeya dadantii (strain 3937) (Erwinia chrysanthemi (strain 3937)).